The following is a 451-amino-acid chain: Sex peptide receptor-related protein 2 (451 aa).

The Extracellular portion of the chain corresponds to 1-63 (MNYEVYCGNA…DNLEIVVYGQ (63 aa)). N15 carries N-linked (GlcNAc...) asparagine glycosylation. The helical transmembrane segment at 64-84 (IFPILVLFAVFANAAVALVLS) threads the bilayer. Topologically, residues 85 to 97 (KKHMITPTNVVLK) are cytoplasmic. A helical membrane pass occupies residues 98–118 (YMAIAELLVGLVPLPWTLFFF). Residues 119 to 140 (SMGNIKETHRLELWWCYLQKYS) are Extracellular-facing. C134 and C225 are disulfide-bonded. The helical transmembrane segment at 141–161 (MDAFPPVFHMIAMWLTVLLAA) threads the bilayer. Residues 162–183 (QRYVSISHPLHSRSACNVKNVR) lie on the Cytoplasmic side of the membrane. Residues 184–204 (LATMIITVTSFLCGLPKSFDY) form a helical membrane-spanning segment. The Extracellular portion of the chain corresponds to 205–251 (EYETVHGWIYSHGNWTYASSCVMMPTAILTNMGQTVYFNIYFWTRAL). N-linked (GlcNAc...) asparagine glycosylation is present at N218. A helical membrane pass occupies residues 252-272 (GFIILPSFLLVLLNGLLIKGI). Residues 273 to 301 (RRAQRRKLRLLREKRSEEAARQRDSNSTS) lie on the Cytoplasmic side of the membrane. Residues 302 to 322 (LMLVAIVSIFLIVNLPQAIFM) traverse the membrane as a helical segment. At 323–334 (GLLCVCETFTIK) the chain is on the extracellular side. A helical transmembrane segment spans residues 335–355 (IPILEGTFPAVFLIASNMIVI). At 356–451 (ATYPINFGIY…TQFTTMDRSD (96 aa)) the chain is on the cytoplasmic side.

This sequence belongs to the G-protein coupled receptor 1 family. Expressed in head neurons including the ASE sensory neurons and the ASI and AWB chemosensory neurons, the midbody neurons SDQ, and motor neurons in the tail.

It is found in the cell membrane. In terms of biological role, G-protein coupled receptor for the neuropeptide like protein nlp-38. Plays a role in several types of aversive gustatory associative learning including gustatory plasticity and salt avoidance learning. Its role in salt avoidance learning may be through activation of the transcription factor crh-1/CREB and de novo transcription and translation, which in turn promotes the formation of long-term memory. In Caenorhabditis elegans, this protein is Sex peptide receptor-related protein 2.